A 123-amino-acid polypeptide reads, in one-letter code: Small ribosomal subunit protein uS13 (123 aa).

The segment at Gly-95–Lys-123 is disordered.

This sequence belongs to the universal ribosomal protein uS13 family. As to quaternary structure, part of the 30S ribosomal subunit. Forms a loose heterodimer with protein S19. Forms two bridges to the 50S subunit in the 70S ribosome.

Its function is as follows. Located at the top of the head of the 30S subunit, it contacts several helices of the 16S rRNA. In the 70S ribosome it contacts the 23S rRNA (bridge B1a) and protein L5 of the 50S subunit (bridge B1b), connecting the 2 subunits; these bridges are implicated in subunit movement. Contacts the tRNAs in the A and P-sites. This chain is Small ribosomal subunit protein uS13, found in Desulfitobacterium hafniense (strain DSM 10664 / DCB-2).